Reading from the N-terminus, the 507-residue chain is Ribose import ATP-binding protein RbsA 2 (507 aa).

ABC transporter domains are found at residues 7 to 245 (FSLD…VGRN) and 249 to 498 (LFTR…MPQS). 39–46 (GENGAGKS) contacts ATP.

This sequence belongs to the ABC transporter superfamily. Ribose importer (TC 3.A.1.2.1) family. The complex is composed of an ATP-binding protein (RbsA), two transmembrane proteins (RbsC) and a solute-binding protein (RbsB).

It is found in the cell inner membrane. The catalysed reaction is D-ribose(out) + ATP + H2O = D-ribose(in) + ADP + phosphate + H(+). In terms of biological role, part of the ABC transporter complex RbsABC involved in ribose import. Responsible for energy coupling to the transport system. The sequence is that of Ribose import ATP-binding protein RbsA 2 from Mesorhizobium japonicum (strain LMG 29417 / CECT 9101 / MAFF 303099) (Mesorhizobium loti (strain MAFF 303099)).